Here is a 167-residue protein sequence, read N- to C-terminus: CGG triplet repeat-binding protein 1 (167 aa).

Position 56 is a phosphoserine (Ser56). The interval 65–86 (KTHTKRKAEFEEQNVRKKQRPL) is disordered. A Nuclear localization signal motif is present at residues 80–84 (RKKQR). Residue Ser164 is modified to Phosphoserine.

It is found in the nucleus. Its function is as follows. Binds to nonmethylated 5'-d(CGG)(n)-3' trinucleotide repeats in the FMR1 promoter. May play a role in regulating FMR1 promoter. This Mus musculus (Mouse) protein is CGG triplet repeat-binding protein 1 (Cggbp1).